The following is a 979-amino-acid chain: MNAPHPASSALAAERPTLADLEARDAFAHRHIGPSADEQTAMLGTLGYTSRAALIDAVIPPAIRRQDGMPLGEFTQPLTEEAALAKLRGIAGQNRVVKSLIGQGYYGTHTPGVILRNILENPAWYTAYTPYQPEISQGRLEAMLNFQQMVIDLTAMDIANASMLDEATAAAEAMTLLQRIGKSKSTVFFVADDVLPQTLEVVRTRAEPIGVQVVTGPAADAAKHDAFGVLLQYPGANGALLGDLATYQALTDAVHAAGGLVVAAADLLALTLLAAPGEWGADVVIGNTQRFGVPFGFGGPHAGYMAVRDAFKRSMPGRLVGVTIDAQGNPAYRLALQTREQHIRREKATSNICTAQVLLGVMASMYAVYHGPQGLKRIAQRVHRLSATLAAGLRAIGYTLESDAFFDTLTVVTGPRTANLHIAAQAHGINLRQIDDARLGISLDETVTRADVVALWEVFAHAAHAAAPDFDQTEAGVADAYPASLVRQSAYLTHPVFNAHHSEHEMLRYLRSLADKDLALDRTMIPLGSCTMKLNATAEMLPVTWPEFSNIHPFAPADQTVGYREMIDQLEQMLCAATGYAAVSLQPNAGSQGEYAGLLIIHAYHASRGEAHRNVCLIPSSAHGTNPASAQMAGMQVVVVACDERGNVDLADLEKKAAEHSKNLAAIMITYPSTHGVFEEGVKRVCEIVHSHGGQVYVDGANMNAMVGTAAPGHFGGDVSHLNLHKTFCIPHGGGGPGVGPVAVGAHLAPFLPGRAASGEDASQNIGNVSASAFGSASILPISWMYIAMMGAAGLTAATETAILSANYVAKRLAPYYPVLYTGAHGLVAHECILDIRPLQKESGISNEDIAKRLMDFGFHAPTMSFPVPGTLMIEPTESEPKVELDRFIDAMIAIRGEVDKVISGEFDREDNPLKHAPHTAAVVMADDWSHKYTREQAAYPVASLRARKYWPPVGRADNVYGDRNLFCACVPMSEYAQD.

The residue at position 726 (Lys726) is an N6-(pyridoxal phosphate)lysine.

Belongs to the GcvP family. In terms of assembly, the glycine cleavage system is composed of four proteins: P, T, L and H. The cofactor is pyridoxal 5'-phosphate.

It carries out the reaction N(6)-[(R)-lipoyl]-L-lysyl-[glycine-cleavage complex H protein] + glycine + H(+) = N(6)-[(R)-S(8)-aminomethyldihydrolipoyl]-L-lysyl-[glycine-cleavage complex H protein] + CO2. The glycine cleavage system catalyzes the degradation of glycine. The P protein binds the alpha-amino group of glycine through its pyridoxal phosphate cofactor; CO(2) is released and the remaining methylamine moiety is then transferred to the lipoamide cofactor of the H protein. The sequence is that of Glycine dehydrogenase (decarboxylating) from Ralstonia pickettii (strain 12J).